A 435-amino-acid chain; its full sequence is Galactomannan galactosyltransferase 1 (435 aa).

Topologically, residues 1–20 (MAKFGSRNKSPKWISNGCCF) are cytoplasmic. The chain crosses the membrane as a helical; Signal-anchor for type II membrane protein span at residues 21 to 41 (LLGAFTALLLLWGLCSFIIPI). The Lumenal portion of the chain corresponds to 42 to 435 (PNTDPKLNSV…SPLPFGYPAA (394 aa)). 2 N-linked (GlcNAc...) asparagine glycosylation sites follow: Asn230 and Asn328. Positions 321–354 (EIVKTYENISERYDEVERKVEGLRRRHAEKVSEK) form a coiled coil.

Belongs to the glycosyltransferase 34 family.

It is found in the golgi apparatus membrane. In terms of biological role, galactomannan galactosyltransferase (GMGT) involved in galactomannan biosynthesis in seed endosperm. GMGT specificity is an important factor regulating the distribution and amount of alpha-1,6-galactose (Gal) substitution of the beta-1,4-linked mannan backbone. The chain is Galactomannan galactosyltransferase 1 (GMGT1) from Cyamopsis tetragonoloba (Guar).